The following is a 383-amino-acid chain: Lipoyl synthase, mitochondrial (383 aa).

Residues 1-19 (MHASTLTRCMRVAQNARCL) constitute a mitochondrion transit peptide. A disordered region spans residues 69–97 (DAAPGTKPSRKPNASNRKPKWLKAQPTQG). [4Fe-4S] cluster-binding residues include Cys116, Cys121, Cys127, Cys147, Cys151, Cys154, and Ser362. Residues 132–351 (KDGIATATIM…QKVAEQMGFL (220 aa)) form the Radical SAM core domain.

It belongs to the radical SAM superfamily. Lipoyl synthase family. The cofactor is [4Fe-4S] cluster.

The protein localises to the mitochondrion. It catalyses the reaction [[Fe-S] cluster scaffold protein carrying a second [4Fe-4S](2+) cluster] + N(6)-octanoyl-L-lysyl-[protein] + 2 oxidized [2Fe-2S]-[ferredoxin] + 2 S-adenosyl-L-methionine + 4 H(+) = [[Fe-S] cluster scaffold protein] + N(6)-[(R)-dihydrolipoyl]-L-lysyl-[protein] + 4 Fe(3+) + 2 hydrogen sulfide + 2 5'-deoxyadenosine + 2 L-methionine + 2 reduced [2Fe-2S]-[ferredoxin]. It participates in protein modification; protein lipoylation via endogenous pathway; protein N(6)-(lipoyl)lysine from octanoyl-[acyl-carrier-protein]: step 2/2. In terms of biological role, catalyzes the radical-mediated insertion of two sulfur atoms into the C-6 and C-8 positions of the octanoyl moiety bound to the lipoyl domains of lipoate-dependent enzymes, thereby converting the octanoylated domains into lipoylated derivatives. This is Lipoyl synthase, mitochondrial from Phytophthora infestans (strain T30-4) (Potato late blight agent).